Here is a 227-residue protein sequence, read N- to C-terminus: Cytochrome c oxidase subunit 2 (227 aa).

The Mitochondrial intermembrane segment spans residues 1-14; that stretch reads MAHAAQVGLQDATS. Residues 15–45 form a helical membrane-spanning segment; the sequence is PIMEELITFHDHALMIIFLICFLVLYALFLT. Residues 46–59 are Mitochondrial matrix-facing; it reads LTTKLTNTNISDAQ. The chain crosses the membrane as a helical span at residues 60–87; the sequence is EMETVWTILPAIILVLIALPSLRILYMT. At 88 to 227 the chain is on the mitochondrial intermembrane side; that stretch reads DEVNDPSLTI…IFEMGPVFTL (140 aa). The Cu cation site is built by histidine 161, cysteine 196, glutamate 198, cysteine 200, histidine 204, and methionine 207. Glutamate 198 provides a ligand contact to Mg(2+).

It belongs to the cytochrome c oxidase subunit 2 family. Component of the cytochrome c oxidase (complex IV, CIV), a multisubunit enzyme composed of 14 subunits. The complex is composed of a catalytic core of 3 subunits MT-CO1, MT-CO2 and MT-CO3, encoded in the mitochondrial DNA, and 11 supernumerary subunits COX4I1 (or COX4I2), COX5A, COX5B, COX6A1 (or COX6A2), COX6B1 (or COX6B2), COX6C, COX7A2 (or COX7A1), COX7B, COX7C, COX8A and NDUFA4, which are encoded in the nuclear genome. The complex exists as a monomer or a dimer and forms supercomplexes (SCs) in the inner mitochondrial membrane with NADH-ubiquinone oxidoreductase (complex I, CI) and ubiquinol-cytochrome c oxidoreductase (cytochrome b-c1 complex, complex III, CIII), resulting in different assemblies (supercomplex SCI(1)III(2)IV(1) and megacomplex MCI(2)III(2)IV(2)). Found in a complex with TMEM177, COA6, COX18, COX20, SCO1 and SCO2. Interacts with TMEM177 in a COX20-dependent manner. Interacts with COX20. Interacts with COX16. Cu cation serves as cofactor.

It is found in the mitochondrion inner membrane. The catalysed reaction is 4 Fe(II)-[cytochrome c] + O2 + 8 H(+)(in) = 4 Fe(III)-[cytochrome c] + 2 H2O + 4 H(+)(out). Functionally, component of the cytochrome c oxidase, the last enzyme in the mitochondrial electron transport chain which drives oxidative phosphorylation. The respiratory chain contains 3 multisubunit complexes succinate dehydrogenase (complex II, CII), ubiquinol-cytochrome c oxidoreductase (cytochrome b-c1 complex, complex III, CIII) and cytochrome c oxidase (complex IV, CIV), that cooperate to transfer electrons derived from NADH and succinate to molecular oxygen, creating an electrochemical gradient over the inner membrane that drives transmembrane transport and the ATP synthase. Cytochrome c oxidase is the component of the respiratory chain that catalyzes the reduction of oxygen to water. Electrons originating from reduced cytochrome c in the intermembrane space (IMS) are transferred via the dinuclear copper A center (CU(A)) of subunit 2 and heme A of subunit 1 to the active site in subunit 1, a binuclear center (BNC) formed by heme A3 and copper B (CU(B)). The BNC reduces molecular oxygen to 2 water molecules using 4 electrons from cytochrome c in the IMS and 4 protons from the mitochondrial matrix. This Homo sapiens (Human) protein is Cytochrome c oxidase subunit 2 (MT-CO2).